Here is a 275-residue protein sequence, read N- to C-terminus: 3-methyl-2-oxobutanoate hydroxymethyltransferase (275 aa).

Positions 49 and 88 each coordinate Mg(2+). 3-methyl-2-oxobutanoate contacts are provided by residues Asp-49–Ser-50, Asp-88, and Lys-118. Glu-120 is a binding site for Mg(2+). Glu-187 serves as the catalytic Proton acceptor.

The protein belongs to the PanB family. Homodecamer; pentamer of dimers. The cofactor is Mg(2+).

The protein resides in the cytoplasm. The enzyme catalyses 3-methyl-2-oxobutanoate + (6R)-5,10-methylene-5,6,7,8-tetrahydrofolate + H2O = 2-dehydropantoate + (6S)-5,6,7,8-tetrahydrofolate. It functions in the pathway cofactor biosynthesis; (R)-pantothenate biosynthesis; (R)-pantoate from 3-methyl-2-oxobutanoate: step 1/2. Catalyzes the reversible reaction in which hydroxymethyl group from 5,10-methylenetetrahydrofolate is transferred onto alpha-ketoisovalerate to form ketopantoate. The sequence is that of 3-methyl-2-oxobutanoate hydroxymethyltransferase from Brucella suis (strain ATCC 23445 / NCTC 10510).